Here is a 784-residue protein sequence, read N- to C-terminus: 1-phosphatidylinositol 4,5-bisphosphate phosphodiesterase delta-3-A (784 aa).

The segment at 1–25 is disordered; it reads MLGRKKNPETVQTESKSVESKTHDP. The span at 16–25 shows a compositional bias: basic and acidic residues; that stretch reads KSVESKTHDP. In terms of domain architecture, PH spans 38 to 149; it reads LLMLQGSKMM…WVRGIRTLKD (112 aa). Residues 48-78 are substrate binding; that stretch reads KVRSQRWRKDRRLKLLEDCVTVWCESSKTSR. EF-hand domains are found at residues 159–194, 195–230, and 227–262; these read KLDH…INID, LNEQ…MMRR, and MMRR…QGED. Ca(2+)-binding residues include Asp172, Asn174, Asp176, Lys178, Glu183, Asp208, Ser210, Asp212, Arg214, and Glu219. Residues 313–458 enclose the PI-PLC X-box domain; sequence QDMSKPLAHY…LKGRILLKGK (146 aa). Residue His328 is part of the active site. Residues Asn329, Glu358, and Asp360 each coordinate Ca(2+). His373 is an active-site residue. Glu407 contacts Ca(2+). Lys456 and Lys458 together coordinate substrate. A disordered region spans residues 473–498; sequence FTNSSDEESVAGGNKKESKKDLARSA. Residues 486-495 are compositionally biased toward basic and acidic residues; the sequence is NKKESKKDLA. One can recognise a PI-PLC Y-box domain in the interval 506-621; it reads LSDLVVYCQS…GYVLKPEFLC (116 aa). Residues Ser534 and Arg561 each coordinate substrate. In terms of domain architecture, C2 spans 621–750; the sequence is CDPKSDFDPE…TGYRHVHLLK (130 aa). Residues Ile664, Asp666, Asn690, Asp719, and Asp721 each contribute to the Ca(2+) site.

The cofactor is Ca(2+).

The protein localises to the membrane. It localises to the cytoplasm. The protein resides in the cleavage furrow. It catalyses the reaction a 1,2-diacyl-sn-glycero-3-phospho-(1D-myo-inositol-4,5-bisphosphate) + H2O = 1D-myo-inositol 1,4,5-trisphosphate + a 1,2-diacyl-sn-glycerol + H(+). Functionally, hydrolyzes the phosphatidylinositol 4,5-bisphosphate (PIP2) to generate 2 second messenger molecules diacylglycerol (DAG) and inositol 1,4,5-trisphosphate (IP3). DAG mediates the activation of protein kinase C (PKC), while IP3 releases Ca(2+) from intracellular stores. This chain is 1-phosphatidylinositol 4,5-bisphosphate phosphodiesterase delta-3-A (plcd3a), found in Danio rerio (Zebrafish).